We begin with the raw amino-acid sequence, 192 residues long: Transcription termination/antitermination protein NusG (192 aa).

The KOW domain occupies 140 to 168 (VGEIVIVTDGPFETFTGTVEEIDQEKNRL).

Belongs to the NusG family.

Its function is as follows. Participates in transcription elongation, termination and antitermination. The sequence is that of Transcription termination/antitermination protein NusG from Rickettsia felis (strain ATCC VR-1525 / URRWXCal2) (Rickettsia azadi).